Here is a 61-residue protein sequence, read N- to C-terminus: Large ribosomal subunit protein eL37 (61 aa).

Residues C19, C22, C34, and C37 each contribute to the Zn(2+) site. The C4-type zinc-finger motif lies at 19–37 (CRRCGRNAYNVSKHYCAAC).

It belongs to the eukaryotic ribosomal protein eL37 family. Requires Zn(2+) as cofactor.

Its function is as follows. Binds to the 23S rRNA. This chain is Large ribosomal subunit protein eL37, found in Saccharolobus islandicus (strain L.S.2.15 / Lassen #1) (Sulfolobus islandicus).